A 127-amino-acid chain; its full sequence is Large-conductance mechanosensitive channel (127 aa).

A run of 3 helical transmembrane segments spans residues Glu9–Phe29, Ile32–Val52, and Val75–Leu95.

This sequence belongs to the MscL family. In terms of assembly, homopentamer.

The protein localises to the cell inner membrane. Functionally, channel that opens in response to stretch forces in the membrane lipid bilayer. May participate in the regulation of osmotic pressure changes within the cell. The polypeptide is Large-conductance mechanosensitive channel (Legionella pneumophila (strain Corby)).